We begin with the raw amino-acid sequence, 273 residues long: Phosphate import ATP-binding protein PstB (273 aa).

Positions 27–268 constitute an ABC transporter domain; the sequence is VTVRNLNFYY…PSDRRTQDYI (242 aa). 59–66 serves as a coordination point for ATP; sequence GPSGCGKS.

It belongs to the ABC transporter superfamily. Phosphate importer (TC 3.A.1.7) family. In terms of assembly, the complex is composed of two ATP-binding proteins (PstB), two transmembrane proteins (PstC and PstA) and a solute-binding protein (PstS).

The protein resides in the cell inner membrane. The catalysed reaction is phosphate(out) + ATP + H2O = ADP + 2 phosphate(in) + H(+). In terms of biological role, part of the ABC transporter complex PstSACB involved in phosphate import. Responsible for energy coupling to the transport system. The protein is Phosphate import ATP-binding protein PstB of Bradyrhizobium diazoefficiens (strain JCM 10833 / BCRC 13528 / IAM 13628 / NBRC 14792 / USDA 110).